The following is a 538-amino-acid chain: Tryptophan 7-halogenase PrnA (538 aa).

8 residues coordinate FAD: G13, T15, A16, S39, I42, I45, E49, and A50. Residue K79 is part of the active site. K79 is a binding site for 7-chloro-L-tryptophan. The FAD site is built by V187 and L337. E346 is a binding site for 7-chloro-L-tryptophan. E346 provides a ligand contact to L-tryptophan. Residues T348 and G349 each coordinate chloride. Position 350 (I350) interacts with FAD. The 7-chloro-L-tryptophan site is built by Y443, Y444, E450, and F454. L-tryptophan is bound by residues Y443, Y444, E450, and F454.

The protein belongs to the flavin-dependent halogenase family. Bacterial tryptophan halogenase subfamily. Homodimer.

It catalyses the reaction L-tryptophan + FADH2 + chloride + O2 = 7-chloro-L-tryptophan + FAD + 2 H2O. The protein operates within antibiotic biosynthesis. Functionally, involved in the biosynthesis of the antifungal antibiotic pyrrolnitrin. Catalyzes the chlorination of tryptophan (Trp) at C7 position to yield 7-chloro-L-tryptophan (7-CLT). The sequence is that of Tryptophan 7-halogenase PrnA from Pseudomonas fluorescens.